The chain runs to 139 residues: MVKAVCVLKGTTGEVTGTVYFEQESDSAPVKLTGQIIGLAPGLHGFHVHAFGDNTNXXXXXXXXXXXXXXTHAGPTDKDRHVGDLGNVAKIDITDKMLTLNGPLSIIGRTMVIHEKADDLGKGGNDESLKTGNAGGRMA.

Cysteine 6 is lipidated: S-palmitoyl cysteine. The Cu cation site is built by histidine 47 and histidine 49. Residues histidine 72, histidine 81, and aspartate 84 each contribute to the Zn(2+) site. Residue histidine 114 coordinates Cu cation. Over residues 118–129 the composition is skewed to basic and acidic residues; sequence DDLGKGGNDESL. A disordered region spans residues 118 to 139; the sequence is DDLGKGGNDESLKTGNAGGRMA.

This sequence belongs to the Cu-Zn superoxide dismutase family. Homodimer. Cu cation serves as cofactor. The cofactor is Zn(2+).

The protein resides in the cytoplasm. Its subcellular location is the nucleus. It carries out the reaction 2 superoxide + 2 H(+) = H2O2 + O2. Destroys radicals which are normally produced within the cells and which are toxic to biological systems. In Lampanyctus crocodilus (Jewel lanternfish), this protein is Superoxide dismutase [Cu-Zn] (sod1).